The following is a 149-amino-acid chain: Large ribosomal subunit protein bL9 (149 aa).

The protein belongs to the bacterial ribosomal protein bL9 family.

Functionally, binds to the 23S rRNA. The polypeptide is Large ribosomal subunit protein bL9 (Sulfurihydrogenibium sp. (strain YO3AOP1)).